We begin with the raw amino-acid sequence, 97 residues long: ESAT-6-like protein EsxG (97 aa).

This sequence belongs to the WXG100 family. CFP-10 subfamily. In terms of assembly, forms a tight 1:1 complex with EsxH.

Its subcellular location is the secreted. The sequence is that of ESAT-6-like protein EsxG from Mycolicibacterium smegmatis (strain ATCC 700084 / mc(2)155) (Mycobacterium smegmatis).